Here is a 420-residue protein sequence, read N- to C-terminus: Argininosuccinate synthase (420 aa).

ATP is bound by residues 9–17 (AYSGGLDTS) and Ala35. Tyr86 and Ser91 together coordinate L-citrulline. Residue 114–122 (SHGCTGKGN) coordinates ATP. Residues Thr118, Asn122, and Asp123 each contribute to the L-aspartate site. An L-citrulline-binding site is contributed by Asn122. The L-citrulline site is built by Arg126, Ser179, Ser188, Glu273, and Tyr285.

Belongs to the argininosuccinate synthase family. Type 1 subfamily. In terms of assembly, homotetramer.

The protein resides in the cytoplasm. The enzyme catalyses L-citrulline + L-aspartate + ATP = 2-(N(omega)-L-arginino)succinate + AMP + diphosphate + H(+). It functions in the pathway amino-acid biosynthesis; L-arginine biosynthesis; L-arginine from L-ornithine and carbamoyl phosphate: step 2/3. Functionally, catalyzes the eighth step in arginine biosynthesis. Also has a catabolic function as the first enzyme of citrulline utilization as nitrogen source via arginine and the reactions involved in the arginase pathway. The sequence is that of Argininosuccinate synthase (ARG1) from Saccharomyces cerevisiae (strain ATCC 204508 / S288c) (Baker's yeast).